Here is a 166-residue protein sequence, read N- to C-terminus: UPF0304 protein VP0990 (166 aa).

Belongs to the UPF0304 family.

The sequence is that of UPF0304 protein VP0990 from Vibrio parahaemolyticus serotype O3:K6 (strain RIMD 2210633).